The primary structure comprises 406 residues: NAD(P)H-quinone oxidoreductase subunit H, organellar chromatophore (406 aa).

The protein belongs to the complex I 49 kDa subunit family. NDH is composed of at least 16 different subunits, 5 of which are encoded in the nucleus.

It is found in the plastid. The protein resides in the organellar chromatophore thylakoid membrane. It carries out the reaction a quinone + NADH + H(+) = a quinol + NAD(+). Its function is as follows. NDH shuttles electrons from NAD(P)H:plastoquinone, via FMN and iron-sulfur (Fe-S) centers, to quinones in the photosynthetic chain and possibly in a chloroplast respiratory chain. The immediate electron acceptor for the enzyme in this species is believed to be plastoquinone. Couples the redox reaction to proton translocation, and thus conserves the redox energy in a proton gradient. This is NAD(P)H-quinone oxidoreductase subunit H, organellar chromatophore from Paulinella chromatophora.